We begin with the raw amino-acid sequence, 324 residues long: MLLPIIMLTSGVANTVLSKYQDSIAEESEPIKSMAVLQSLNIFLGEACLWFYVLYKRHSQGPGYESLDHLPLKHKVFMALPAIMDICGSTLMNVGLLYTSASIYQMTRGSLIIFVALFATTLLKRTIGQLQWLSLSFVVLGVAIVGYSGSSSSIGSNPILGITAVLIGQFFLATQFTIEEYILSFIQVDPSELVAYEGTYGVFFVLLGMIISYYFIGSTTAGYHGWFDYSHVISRFNEVPALYVISGVILVSIAFFNVSGLAITKLHSATTRSLLDIARTFGIWIIAMAMGMESFHLLQFLGFVLLIYGIFTYHSIIKFPLAES.

Transmembrane regions (helical) follow at residues 34–54, 76–96, 103–123, 127–147, 158–178, 198–218, 243–263, 275–295, and 297–317; these read MAVLQSLNIFLGEACLWFYVL, VFMALPAIMDICGSTLMNVGL, IYQMTRGSLIIFVALFATTLL, IGQLQWLSLSFVVLGVAIVGY, PILGITAVLIGQFFLATQFTI, GTYGVFFVLLGMIISYYFIGS, YVISGVILVSIAFFNVSGLAI, LDIARTFGIWIIAMAMGMESF, and LLQFLGFVLLIYGIFTYHSII.

It is found in the membrane. This is an uncharacterized protein from Schizosaccharomyces pombe (strain 972 / ATCC 24843) (Fission yeast).